The following is a 344-amino-acid chain: Glyceraldehyde-3-phosphate dehydrogenase (344 aa).

NAD(+) contacts are provided by residues 11 to 12 (TI) and Gly110. 139–141 (SCN) serves as a coordination point for D-glyceraldehyde 3-phosphate. Cys140 serves as the catalytic Nucleophile. Arg169 is a binding site for NAD(+). A D-glyceraldehyde 3-phosphate-binding site is contributed by 195 to 196 (HG). Gln302 is an NAD(+) binding site.

The protein belongs to the glyceraldehyde-3-phosphate dehydrogenase family. Homotetramer.

The protein localises to the cytoplasm. It carries out the reaction D-glyceraldehyde 3-phosphate + phosphate + NADP(+) = (2R)-3-phospho-glyceroyl phosphate + NADPH + H(+). The enzyme catalyses D-glyceraldehyde 3-phosphate + phosphate + NAD(+) = (2R)-3-phospho-glyceroyl phosphate + NADH + H(+). It participates in carbohydrate degradation; glycolysis; pyruvate from D-glyceraldehyde 3-phosphate: step 1/5. This is Glyceraldehyde-3-phosphate dehydrogenase from Pyrobaculum arsenaticum (strain DSM 13514 / JCM 11321 / PZ6).